The chain runs to 194 residues: Peptidyl-tRNA hydrolase (194 aa).

Tyrosine 17 contacts tRNA. Catalysis depends on histidine 22, which acts as the Proton acceptor. The tRNA site is built by phenylalanine 68, asparagine 70, and asparagine 116.

The protein belongs to the PTH family. As to quaternary structure, monomer.

It is found in the cytoplasm. The enzyme catalyses an N-acyl-L-alpha-aminoacyl-tRNA + H2O = an N-acyl-L-amino acid + a tRNA + H(+). In terms of biological role, hydrolyzes ribosome-free peptidyl-tRNAs (with 1 or more amino acids incorporated), which drop off the ribosome during protein synthesis, or as a result of ribosome stalling. Its function is as follows. Catalyzes the release of premature peptidyl moieties from peptidyl-tRNA molecules trapped in stalled 50S ribosomal subunits, and thus maintains levels of free tRNAs and 50S ribosomes. In Shewanella woodyi (strain ATCC 51908 / MS32), this protein is Peptidyl-tRNA hydrolase.